The following is a 127-amino-acid chain: uncharacterized protein (127 aa).

It is found in the mitochondrion. This is an uncharacterized protein from Arabidopsis thaliana (Mouse-ear cress).